Consider the following 554-residue polypeptide: Valerianol synthase TPS1G (554 aa).

Mg(2+) is bound by residues Asp307 and Asp311. A DDXXD motif motif is present at residues 326-330; sequence VQRWD. The Mg(2+) site is built by Asp452, Ser456, and Glu460.

Belongs to the terpene synthase family. Mg(2+) serves as cofactor.

It catalyses the reaction (2E,6E)-farnesyl diphosphate + H2O = valerianol + diphosphate. It participates in secondary metabolite biosynthesis; terpenoid biosynthesis. Its function is as follows. Terpene synthase that catalyzes the biosynthesis of the terpene valerianol, which is a volatile compound of floral scent. The polypeptide is Valerianol synthase TPS1G (Camellia hiemalis (Camellia)).